The sequence spans 122 residues: Large ribosomal subunit protein uL14 (122 aa).

It belongs to the universal ribosomal protein uL14 family. As to quaternary structure, part of the 50S ribosomal subunit. Forms a cluster with proteins L3 and L19. In the 70S ribosome, L14 and L19 interact and together make contacts with the 16S rRNA in bridges B5 and B8.

In terms of biological role, binds to 23S rRNA. Forms part of two intersubunit bridges in the 70S ribosome. This chain is Large ribosomal subunit protein uL14, found in Streptococcus agalactiae serotype Ia (strain ATCC 27591 / A909 / CDC SS700).